The primary structure comprises 255 residues: Adenosylcobinamide-GDP ribazoletransferase (255 aa).

6 helical membrane passes run 24-44 (LIAYVPLVALFDAALAASLYV), 45-65 (AIYGISKLLASFISVSAIYIV), 98-118 (VGAGGVFTLIFVYLLALISLS), 122-142 (LYIGIFSIILAEFLSKSMMMI), 164-184 (KHDSLYTVEFVVIPIVLALLS), and 187-207 (SIMISVALAFLIFIIVKMAVI).

Belongs to the CobS family. The cofactor is Mg(2+).

Its subcellular location is the cell membrane. It carries out the reaction alpha-ribazole + adenosylcob(III)inamide-GDP = adenosylcob(III)alamin + GMP + H(+). The catalysed reaction is alpha-ribazole 5'-phosphate + adenosylcob(III)inamide-GDP = adenosylcob(III)alamin 5'-phosphate + GMP + H(+). It participates in cofactor biosynthesis; adenosylcobalamin biosynthesis; adenosylcobalamin from cob(II)yrinate a,c-diamide: step 7/7. Functionally, joins adenosylcobinamide-GDP and alpha-ribazole to generate adenosylcobalamin (Ado-cobalamin). Also synthesizes adenosylcobalamin 5'-phosphate from adenosylcobinamide-GDP and alpha-ribazole 5'-phosphate. This chain is Adenosylcobinamide-GDP ribazoletransferase, found in Thermoplasma acidophilum (strain ATCC 25905 / DSM 1728 / JCM 9062 / NBRC 15155 / AMRC-C165).